A 254-amino-acid polypeptide reads, in one-letter code: Nickel import ATP-binding protein NikD (254 aa).

One can recognise an ABC transporter domain in the interval 2–241 (PQQIELRNIA…PKHAVTRSLV (240 aa)). 36-43 (GGSGSGKS) is a binding site for ATP.

It belongs to the ABC transporter superfamily. Nickel importer (TC 3.A.1.5.3) family. As to quaternary structure, the complex is composed of two ATP-binding proteins (NikD and NikE), two transmembrane proteins (NikB and NikC) and a solute-binding protein (NikA).

The protein resides in the cell inner membrane. It catalyses the reaction Ni(2+)(out) + ATP + H2O = Ni(2+)(in) + ADP + phosphate + H(+). Part of the ABC transporter complex NikABCDE involved in nickel import. Responsible for energy coupling to the transport system. In Escherichia coli O157:H7, this protein is Nickel import ATP-binding protein NikD.